A 249-amino-acid polypeptide reads, in one-letter code: Probable transcriptional regulator ycf27 (249 aa).

Residues 13-126 (HLLIVDDENN…ELEARIQSIL (114 aa)) enclose the Response regulatory domain. Asp62 is modified (4-aspartylphosphate). Positions 82–100 (DIPIIMLTALEDVLDKVTG) form a DNA-binding region, H-T-H motif. Positions 142-246 (INLFKTGSLN…ARGTGYLCRK (105 aa)) form a DNA-binding region, ompR/PhoB-type.

The protein resides in the plastid. It is found in the chloroplast. Its function is as follows. Probable promoter-specific protein mediating the interaction between DNA and RNA polymerase. In Cyanidium caldarium (Red alga), this protein is Probable transcriptional regulator ycf27 (ycf27).